Here is a 760-residue protein sequence, read N- to C-terminus: Translocation protein SEC63 homolog (760 aa).

The Lumenal segment spans residues 1–14; the sequence is MAGQQFQYDDSGNT. The chain crosses the membrane as a helical span at residues 15–35; the sequence is FFYFLTSFVGLIVIPATYYLW. Over 36–69 the chain is Cytoplasmic; it reads PRDQNAEQIRLKNIRKVYGRCMWYRLRLLKPQPN. The helical transmembrane segment at 70 to 90 threads the bilayer; sequence IIPTVKKIVLLAGWALFLFLA. The Lumenal portion of the chain corresponds to 91 to 188; sequence YKVSKTDREY…LPAWIVDQKN (98 aa). The J domain occupies 104-165; the sequence is NPYEVLNLDP…ESRKNWEEFG (62 aa). Residues 189 to 209 traverse the membrane as a helical segment; sequence SILVLLVYGLAFMVILPVVVG. One can recognise an SEC63 1 domain in the interval 197-541; the sequence is GLAFMVILPV…LKKKPTPVLL (345 aa). The Cytoplasmic portion of the chain corresponds to 210–760; it reads SWWYRSIRYS…EEEEEEEDDD (551 aa). A disordered region spans residues 492–617; sequence AEEQPAEDGQ…DDEAEWQELQ (126 aa). The segment covering 518–536 has biased composition (basic residues); it reads KGPKKTAKSKKKKPLKKKP. Thr-537 carries the post-translational modification Phosphothreonine. The span at 582–608 shows a compositional bias: basic and acidic residues; that stretch reads NRDSQSEKDDGSDRDSDREQDEKQNKD. Positions 597–635 form a coiled coil; it reads SDREQDEKQNKDDEAEWQELQQSIQRKERALLETKSKIT. An SEC63 2 domain is found at 637 to 714; that stretch reads PVYSLYFPEE…GLDQIKPLKL (78 aa). Residues 720-760 are disordered; sequence KPVPENHPQWDTAIEGDEDQEDSEGFEDSFEEEEEEEEDDD. A compositionally biased stretch (acidic residues) spans 733–760; that stretch reads IEGDEDQEDSEGFEDSFEEEEEEEEDDD. Phosphoserine occurs at positions 742 and 748.

The ER translocon complex consists of channel-forming core components SEC61A1, SEC61B and SEC61G and different auxiliary components such as SEC62 and SEC63. As to expression, widely expressed, with high levels in the liver.

Its subcellular location is the endoplasmic reticulum membrane. Mediates cotranslational and post-translational transport of certain precursor polypeptides across endoplasmic reticulum (ER). Proposed to play an auxiliary role in recognition of precursors with short and apolar signal peptides. May cooperate with SEC62 and HSPA5/BiP to facilitate targeting of small presecretory proteins into the SEC61 channel-forming translocon complex, triggering channel opening for polypeptide translocation to the ER lumen. Required for efficient PKD1/Polycystin-1 biogenesis and trafficking to the plasma membrane of the primary cilia. The protein is Translocation protein SEC63 homolog of Homo sapiens (Human).